Reading from the N-terminus, the 110-residue chain is Insulin (110 aa).

A signal peptide spans 1 to 24 (MALWMRLLPLLALLALWGPDPAQA). 3 disulfides stabilise this stretch: cysteine 31–cysteine 96, cysteine 43–cysteine 109, and cysteine 95–cysteine 100. Residues 57–87 (EAEDLQVGQVELGGGPGAGSLQPLALEGSLQ) constitute a propeptide, c peptide.

The protein belongs to the insulin family. Heterodimer of a B chain and an A chain linked by two disulfide bonds.

Its subcellular location is the secreted. In terms of biological role, insulin decreases blood glucose concentration. It increases cell permeability to monosaccharides, amino acids and fatty acids. It accelerates glycolysis, the pentose phosphate cycle, and glycogen synthesis in liver. The sequence is that of Insulin (INS) from Pongo pygmaeus (Bornean orangutan).